A 290-amino-acid polypeptide reads, in one-letter code: Ribosomal RNA small subunit methyltransferase A (290 aa).

Asn-27, Leu-29, Gly-54, Glu-75, Asp-100, and Asn-125 together coordinate S-adenosyl-L-methionine.

The protein belongs to the class I-like SAM-binding methyltransferase superfamily. rRNA adenine N(6)-methyltransferase family. RsmA subfamily.

Its subcellular location is the cytoplasm. The catalysed reaction is adenosine(1518)/adenosine(1519) in 16S rRNA + 4 S-adenosyl-L-methionine = N(6)-dimethyladenosine(1518)/N(6)-dimethyladenosine(1519) in 16S rRNA + 4 S-adenosyl-L-homocysteine + 4 H(+). In terms of biological role, specifically dimethylates two adjacent adenosines (A1518 and A1519) in the loop of a conserved hairpin near the 3'-end of 16S rRNA in the 30S particle. May play a critical role in biogenesis of 30S subunits. In Streptococcus pneumoniae (strain CGSP14), this protein is Ribosomal RNA small subunit methyltransferase A.